The chain runs to 210 residues: NAD(P)H-hydrate epimerase (210 aa).

One can recognise a YjeF N-terminal domain in the interval 11–210; it reads AHNFDDYTIN…TVADIGIYEP (200 aa). 60–64 lines the (6S)-NADPHX pocket; the sequence is NNGGD. The K(+) site is built by Asn61 and Asp123. Residues 127–133 and Asp156 contribute to the (6S)-NADPHX site; that span reads GVGLSRD. Thr159 is a K(+) binding site.

Belongs to the NnrE/AIBP family. K(+) serves as cofactor.

The catalysed reaction is (6R)-NADHX = (6S)-NADHX. It carries out the reaction (6R)-NADPHX = (6S)-NADPHX. Functionally, catalyzes the epimerization of the S- and R-forms of NAD(P)HX, a damaged form of NAD(P)H that is a result of enzymatic or heat-dependent hydration. This is a prerequisite for the S-specific NAD(P)H-hydrate dehydratase to allow the repair of both epimers of NAD(P)HX. This chain is NAD(P)H-hydrate epimerase, found in Oenococcus oeni (strain ATCC BAA-331 / PSU-1).